Here is a 369-residue protein sequence, read N- to C-terminus: DNA replication and repair protein RecF (369 aa).

Residue 30-37 (GDNGSGKT) participates in ATP binding.

The protein belongs to the RecF family.

The protein resides in the cytoplasm. The RecF protein is involved in DNA metabolism; it is required for DNA replication and normal SOS inducibility. RecF binds preferentially to single-stranded, linear DNA. It also seems to bind ATP. The protein is DNA replication and repair protein RecF of Pseudomonas aeruginosa (strain UCBPP-PA14).